The following is a 211-amino-acid chain: Thymidylate kinase (211 aa).

An ATP-binding site is contributed by 10–17 (GLDGSGKT).

The protein belongs to the thymidylate kinase family.

The enzyme catalyses dTMP + ATP = dTDP + ADP. Functionally, phosphorylation of dTMP to form dTDP in both de novo and salvage pathways of dTTP synthesis. The chain is Thymidylate kinase from Blochmanniella floridana.